The sequence spans 486 residues: MSSPSPPAPVACAAISASEKVDGFTRKSVRKAQRQKRSQGSSQFRSQGSQAELHPLPQLKDATSNEQQELFCQKLQQCCVLFDFMDSVSDLKSKEIKRATLNELVEYVSTNRGVIVESAYSDIVKMISANIFRTLPPSDNPDFDPEEDEPTLEASWPHIQLVYEFFLRFLESPDFQPSIAKRYIDQKFVQQLLELFDSEDPRERDFLKTVLHRIYGKFLGLRAFIRKQINNIFLRFIYETEHFNGVAELLEILGSIINGFALPLKAEHKQFLMKVLIPMHTAKGLALFHAQLAYCVVQFLEKDTTLTEPVIRGLLKFWPKTCSQKEVMFLGEIEEILDVIEPTQFKKIEEPLFKQISKCVSSSHFQVAERALYFWNNEYILSLIEENIDKILPIMFASLYKISKEHWNQTIVALVYNVLKTLMEMNGKLFDDLTSSYKAERQREKKKELEREELWKKLEELQLKKALEKQNNAYNMHSIRSSTSAK.

Position 2 is an N-acetylserine (Ser-2). Residues 22-52 (DGFTRKSVRKAQRQKRSQGSSQFRSQGSQAE) form a disordered region. Positions 27-37 (KSVRKAQRQKR) are enriched in basic residues. A compositionally biased stretch (low complexity) spans 38–51 (SQGSSQFRSQGSQA). A phosphoserine mark is found at Ser-41, Ser-42, and Ser-49.

It belongs to the phosphatase 2A regulatory subunit B56 family. In terms of assembly, PP2A consists of a common heterodimeric core enzyme, composed of a 36 kDa catalytic subunit (subunit C) and a 65 kDa constant regulatory subunit (PR65 or subunit A), that associates with a variety of regulatory subunits. Proteins that associate with the core dimer include three families of regulatory subunits B (the R2/B/PR55/B55, R3/B''/PR72/PR130/PR59 and R5/B'/B56 families), the 48 kDa variable regulatory subunit, viral proteins, and cell signaling molecules. Interacts with SGO1. As to expression, widely expressed with highest levels in thymus and ovary.

It is found in the cytoplasm. The protein resides in the nucleus. It localises to the chromosome. Its subcellular location is the centromere. The B regulatory subunit might modulate substrate selectivity and catalytic activity, and might also direct the localization of the catalytic enzyme to a particular subcellular compartment. This chain is Serine/threonine-protein phosphatase 2A 56 kDa regulatory subunit alpha isoform (Ppp2r5a), found in Mus musculus (Mouse).